A 240-amino-acid polypeptide reads, in one-letter code: Ribosomal RNA large subunit methyltransferase E (240 aa).

The tract at residues Met1–Gln28 is disordered. 5 residues coordinate S-adenosyl-L-methionine: Gly80, Trp82, Asp103, Asp119, and Asp143. Catalysis depends on Lys183, which acts as the Proton acceptor.

Belongs to the class I-like SAM-binding methyltransferase superfamily. RNA methyltransferase RlmE family.

Its subcellular location is the cytoplasm. It catalyses the reaction uridine(2552) in 23S rRNA + S-adenosyl-L-methionine = 2'-O-methyluridine(2552) in 23S rRNA + S-adenosyl-L-homocysteine + H(+). In terms of biological role, specifically methylates the uridine in position 2552 of 23S rRNA at the 2'-O position of the ribose in the fully assembled 50S ribosomal subunit. This Azorhizobium caulinodans (strain ATCC 43989 / DSM 5975 / JCM 20966 / LMG 6465 / NBRC 14845 / NCIMB 13405 / ORS 571) protein is Ribosomal RNA large subunit methyltransferase E.